Reading from the N-terminus, the 152-residue chain is 3-hydroxyacyl-[acyl-carrier-protein] dehydratase FabZ (152 aa).

The active site involves His57.

This sequence belongs to the thioester dehydratase family. FabZ subfamily.

It is found in the cytoplasm. It carries out the reaction a (3R)-hydroxyacyl-[ACP] = a (2E)-enoyl-[ACP] + H2O. Functionally, involved in unsaturated fatty acids biosynthesis. Catalyzes the dehydration of short chain beta-hydroxyacyl-ACPs and long chain saturated and unsaturated beta-hydroxyacyl-ACPs. This chain is 3-hydroxyacyl-[acyl-carrier-protein] dehydratase FabZ, found in Bradyrhizobium sp. (strain ORS 278).